Reading from the N-terminus, the 273-residue chain is 3-methyl-2-oxobutanoate hydroxymethyltransferase (273 aa).

2 residues coordinate Mg(2+): Asp-53 and Asp-92. 3-methyl-2-oxobutanoate is bound by residues 53-54, Asp-92, and Lys-120; that span reads DS. Glu-122 is a binding site for Mg(2+). Glu-189 functions as the Proton acceptor in the catalytic mechanism.

This sequence belongs to the PanB family. In terms of assembly, homodecamer; pentamer of dimers. It depends on Mg(2+) as a cofactor.

The protein localises to the cytoplasm. It catalyses the reaction 3-methyl-2-oxobutanoate + (6R)-5,10-methylene-5,6,7,8-tetrahydrofolate + H2O = 2-dehydropantoate + (6S)-5,6,7,8-tetrahydrofolate. Its pathway is cofactor biosynthesis; (R)-pantothenate biosynthesis; (R)-pantoate from 3-methyl-2-oxobutanoate: step 1/2. In terms of biological role, catalyzes the reversible reaction in which hydroxymethyl group from 5,10-methylenetetrahydrofolate is transferred onto alpha-ketoisovalerate to form ketopantoate. This is 3-methyl-2-oxobutanoate hydroxymethyltransferase from Cupriavidus necator (strain ATCC 17699 / DSM 428 / KCTC 22496 / NCIMB 10442 / H16 / Stanier 337) (Ralstonia eutropha).